The following is a 186-amino-acid chain: MHTQSFFSAAEEVMKRTIDRLKCELSSIRTGRVNSAAIETIKVESYGSIMPINQIASISVSDARTIEIRPWDVSQLSAIEKAILKADIGMSPANDGKLIRVSVPHLTQERRKEIAKSIGKMAEEFRVAIRNERRVLVENIKKLEKDKVITEDDKKKLEVEAQKVTDGYIKKIDDSIVVKEKEVMQV.

It belongs to the RRF family.

It localises to the cytoplasm. Functionally, responsible for the release of ribosomes from messenger RNA at the termination of protein biosynthesis. May increase the efficiency of translation by recycling ribosomes from one round of translation to another. This Endomicrobium trichonymphae protein is Ribosome-recycling factor.